The primary structure comprises 563 residues: MSIRNDNASGGYMQPDQSSNASMHKRDLRVEEEIKPLDDMDSKGAVAADGEVHLRKSFSLWSILGVGFGLTNSWFGISTSMVAGISSGGPMMIVYGIIIVALISICIGTSLGELSSAYPHAGGQFWWSLKLAPPKYKRFAAYMCGSFAYAGSVFTSASTTLSVATEVVGMYALTHPEFIPKRWHIFVCFELLHLFLMFFNCYGKSLPIISSSSLYISLLSFFTITITVLACSHGKFNDAKFVFATFNNETGWKNGGIAFIVGLINPAWSFSCLDCATHMAFEVEKPERVIPIAIMGTVAIGFVTSFCYVIAMFFSIQDLDAVLSSTTGAPILDIYNQALGNKSGAIFLGCLILFTSFGCVIACHTWQARLCWSFARDNGLPLSRLWSQVNPHTGVPLNAHLMSCAWITLIGLLYLASSTAFQSLITGCIAFLLLSYIIPVICLLAKKRNIAHGPFWLGKFGFFSNIVLLGWTVFSVVFFSFPPVLPVTKDNMNYVCVVIVGYTAYSILYWKYKGKKEFHALEESENEQAEYSNNFDTIEDSREFSVAASDVELENEHVPWGKK.

The tract at residues 1–25 is disordered; that stretch reads MSIRNDNASGGYMQPDQSSNASMHK. The Extracellular segment spans residues 1-57; it reads MSIRNDNASGGYMQPDQSSNASMHKRDLRVEEEIKPLDDMDSKGAVAADGEVHLRKS. 2 N-linked (GlcNAc...) asparagine glycosylation sites follow: Asn-7 and Asn-20. 2 positions are modified to phosphoserine: Ser-22 and Ser-42. Residues 58–78 traverse the membrane as a helical segment; that stretch reads FSLWSILGVGFGLTNSWFGIS. The Cytoplasmic segment spans residues 79-87; sequence TSMVAGISS. The chain crosses the membrane as a helical span at residues 88 to 108; sequence GGPMMIVYGIIIVALISICIG. Over 109-182 the chain is Extracellular; that stretch reads TSLGELSSAY…LTHPEFIPKR (74 aa). Residues 183–203 form a helical membrane-spanning segment; the sequence is WHIFVCFELLHLFLMFFNCYG. Residues 204–205 lie on the Cytoplasmic side of the membrane; it reads KS. A helical transmembrane segment spans residues 206-226; that stretch reads LPIISSSSLYISLLSFFTITI. The Extracellular segment spans residues 227-255; that stretch reads TVLACSHGKFNDAKFVFATFNNETGWKNG. A glycan (N-linked (GlcNAc...) asparagine) is linked at Asn-248. A helical membrane pass occupies residues 256-276; it reads GIAFIVGLINPAWSFSCLDCA. Residues 277-293 are Cytoplasmic-facing; it reads THMAFEVEKPERVIPIA. A helical membrane pass occupies residues 294 to 314; that stretch reads IMGTVAIGFVTSFCYVIAMFF. At 315-342 the chain is on the extracellular side; the sequence is SIQDLDAVLSSTTGAPILDIYNQALGNK. N-linked (GlcNAc...) asparagine glycosylation occurs at Asn-341. A helical transmembrane segment spans residues 343-363; the sequence is SGAIFLGCLILFTSFGCVIAC. Residues 364–398 are Cytoplasmic-facing; it reads HTWQARLCWSFARDNGLPLSRLWSQVNPHTGVPLN. The helical transmembrane segment at 399-417 threads the bilayer; that stretch reads AHLMSCAWITLIGLLYLAS. Topologically, residues 418 to 426 are extracellular; sequence STAFQSLIT. The chain crosses the membrane as a helical span at residues 427-445; it reads GCIAFLLLSYIIPVICLLA. Residues 446–465 are Cytoplasmic-facing; it reads KKRNIAHGPFWLGKFGFFSN. Residues 466–486 traverse the membrane as a helical segment; that stretch reads IVLLGWTVFSVVFFSFPPVLP. The Extracellular segment spans residues 487-491; sequence VTKDN. The chain crosses the membrane as a helical span at residues 492–512; sequence MNYVCVVIVGYTAYSILYWKY. The Cytoplasmic segment spans residues 513–563; sequence KGKKEFHALEESENEQAEYSNNFDTIEDSREFSVAASDVELENEHVPWGKK.

It belongs to the amino acid-polyamine-organocation (APC) superfamily. Amino acid/choline transporter (ACT) (TC 2.A.3.4) family.

It is found in the membrane. It catalyses the reaction choline(out) = choline(in). The catalysed reaction is ethanolamine(in) = ethanolamine(out). Sole choline transporter in yeast. Also transports ethanolamine. This Saccharomyces cerevisiae (strain ATCC 204508 / S288c) (Baker's yeast) protein is Choline transporter (HNM1).